The primary structure comprises 137 residues: Cellular retinoic acid-binding protein 1 (137 aa).

The Nuclear localization signal motif lies at Lys21 to Lys31. Residue Arg132 to Tyr134 coordinates all-trans-retinoate.

This sequence belongs to the calycin superfamily. Fatty-acid binding protein (FABP) family.

Its subcellular location is the cytoplasm. Cytosolic CRABPs may regulate the access of retinoic acid to the nuclear retinoic acid receptors. The sequence is that of Cellular retinoic acid-binding protein 1 (crabp1) from Takifugu rubripes (Japanese pufferfish).